Consider the following 140-residue polypeptide: MAKKVDKVVKLQIPAGKANPAPPVGPALGQAGVNIMGFCKEFNARTQDQAGLIIPVEISVYEDRSFTFITKTPPAPVLLKKAAGIEKGSGEPNKTKVATVTKDQVREIANSKMQDLNAADEEAAMRIIEGTARSMGIVVE.

The protein belongs to the universal ribosomal protein uL11 family. Part of the ribosomal stalk of the 50S ribosomal subunit. Interacts with L10 and the large rRNA to form the base of the stalk. L10 forms an elongated spine to which L12 dimers bind in a sequential fashion forming a multimeric L10(L12)X complex. Post-translationally, one or more lysine residues are methylated.

In terms of biological role, forms part of the ribosomal stalk which helps the ribosome interact with GTP-bound translation factors. This is Large ribosomal subunit protein uL11 from Staphylococcus aureus (strain Mu3 / ATCC 700698).